A 488-amino-acid chain; its full sequence is Photosystem II CP43 reaction center protein (488 aa).

The propeptide occupies 1 to 29 (MTKVFALGWLLKINLMKTLYSLRRFYHVE). A run of 5 helical transmembrane segments spans residues 84–108 (LFEV…PHLA), 149–170 (LIGP…RDKN), 193–215 (KALF…RFVS), 270–290 (KPFA…LSYS), and 306–327 (WYNN…ASQA). Glu-382 lines the [CaMn4O5] cluster pocket. Residues 462–486 (RARAAAAGFEKGINRENEPVLSMRP) traverse the membrane as a helical segment.

This sequence belongs to the PsbB/PsbC family. PsbC subfamily. PSII is composed of 1 copy each of membrane proteins PsbA, PsbB, PsbC, PsbD, PsbE, PsbF, PsbH, PsbI, PsbJ, PsbK, PsbL, PsbM, PsbT, PsbX, PsbY, PsbZ, Psb30/Ycf12, at least 3 peripheral proteins of the oxygen-evolving complex and a large number of cofactors. It forms dimeric complexes. Binds multiple chlorophylls and provides some of the ligands for the Ca-4Mn-5O cluster of the oxygen-evolving complex. It may also provide a ligand for a Cl- that is required for oxygen evolution. PSII binds additional chlorophylls, carotenoids and specific lipids. serves as cofactor.

It is found in the plastid. Its subcellular location is the chloroplast thylakoid membrane. In terms of biological role, one of the components of the core complex of photosystem II (PSII). It binds chlorophyll and helps catalyze the primary light-induced photochemical processes of PSII. PSII is a light-driven water:plastoquinone oxidoreductase, using light energy to abstract electrons from H(2)O, generating O(2) and a proton gradient subsequently used for ATP formation. The polypeptide is Photosystem II CP43 reaction center protein (Pyropia yezoensis (Susabi-nori)).